The chain runs to 473 residues: Ribulose bisphosphate carboxylase large chain 2 (473 aa).

Residues Asn-116 and Thr-166 each coordinate substrate. The active-site Proton acceptor is the Lys-168. Lys-170 contacts substrate. Residues Lys-194, Asp-196, and Glu-197 each coordinate Mg(2+). At Lys-194 the chain carries N6-carboxylysine. His-287 functions as the Proton acceptor in the catalytic mechanism. Residues Arg-288, His-320, and Ser-372 each contribute to the substrate site.

This sequence belongs to the RuBisCO large chain family. Type I subfamily. As to quaternary structure, heterohexadecamer of 8 large chains and 8 small chains. Mg(2+) is required as a cofactor.

The enzyme catalyses 2 (2R)-3-phosphoglycerate + 2 H(+) = D-ribulose 1,5-bisphosphate + CO2 + H2O. It carries out the reaction D-ribulose 1,5-bisphosphate + O2 = 2-phosphoglycolate + (2R)-3-phosphoglycerate + 2 H(+). In terms of biological role, ruBisCO catalyzes two reactions: the carboxylation of D-ribulose 1,5-bisphosphate, the primary event in carbon dioxide fixation, as well as the oxidative fragmentation of the pentose substrate. Both reactions occur simultaneously and in competition at the same active site. The chain is Ribulose bisphosphate carboxylase large chain 2 from Acidithiobacillus ferrooxidans (strain ATCC 23270 / DSM 14882 / CIP 104768 / NCIMB 8455) (Ferrobacillus ferrooxidans (strain ATCC 23270)).